We begin with the raw amino-acid sequence, 429 residues long: Adenylosuccinate synthetase (429 aa).

GTP contacts are provided by residues 13 to 19 (GDEGKGK) and 41 to 43 (GHT). The active-site Proton acceptor is the D14. The Mg(2+) site is built by D14 and G41. Residues 14–17 (DEGK), 39–42 (NAGH), T130, R144, Q224, T239, and R303 contribute to the IMP site. The active-site Proton donor is the H42. 299-305 (ATTGRAR) provides a ligand contact to substrate. GTP is bound by residues R305, 331 to 333 (KLD), and 412 to 414 (STG).

It belongs to the adenylosuccinate synthetase family. As to quaternary structure, homodimer. It depends on Mg(2+) as a cofactor.

It is found in the cytoplasm. The catalysed reaction is IMP + L-aspartate + GTP = N(6)-(1,2-dicarboxyethyl)-AMP + GDP + phosphate + 2 H(+). Its pathway is purine metabolism; AMP biosynthesis via de novo pathway; AMP from IMP: step 1/2. In terms of biological role, plays an important role in the de novo pathway of purine nucleotide biosynthesis. Catalyzes the first committed step in the biosynthesis of AMP from IMP. This is Adenylosuccinate synthetase from Psychrobacter arcticus (strain DSM 17307 / VKM B-2377 / 273-4).